A 375-amino-acid polypeptide reads, in one-letter code: Methylthioribose-1-phosphate isomerase (375 aa).

The Proton donor role is filled by Asp-257.

This sequence belongs to the eIF-2B alpha/beta/delta subunits family. MtnA subfamily.

Its subcellular location is the cytoplasm. The protein localises to the nucleus. It carries out the reaction 5-(methylsulfanyl)-alpha-D-ribose 1-phosphate = 5-(methylsulfanyl)-D-ribulose 1-phosphate. It participates in amino-acid biosynthesis; L-methionine biosynthesis via salvage pathway; L-methionine from S-methyl-5-thio-alpha-D-ribose 1-phosphate: step 1/6. In terms of biological role, catalyzes the interconversion of methylthioribose-1-phosphate (MTR-1-P) into methylthioribulose-1-phosphate (MTRu-1-P). The polypeptide is Methylthioribose-1-phosphate isomerase (Leishmania major).